The primary structure comprises 790 residues: Eukaryotic translation initiation factor 3 subunit C (790 aa).

The segment at 1–62 (MSRFFVSGYN…DGRPSGPAYF (62 aa)) is disordered. Positions 14-53 (SSEEEDLLSSEEELLTSSGEENEDSDFFNDDDESSSDEED) are enriched in acidic residues. Residues 556–728 (FHQHINLELL…IVFTTDSQRS (173 aa)) enclose the PCI domain. The tract at residues 748–790 (NEKTSSNGYAKKNQSQTQPQAQSKEVEENKFRYANVNTNTDEF) is disordered. Polar residues predominate over residues 751-770 (TSSNGYAKKNQSQTQPQAQS).

It belongs to the eIF-3 subunit C family. In terms of assembly, component of the eukaryotic translation initiation factor 3 (eIF-3) complex.

The protein localises to the cytoplasm. Component of the eukaryotic translation initiation factor 3 (eIF-3) complex, which is involved in protein synthesis of a specialized repertoire of mRNAs and, together with other initiation factors, stimulates binding of mRNA and methionyl-tRNAi to the 40S ribosome. The eIF-3 complex specifically targets and initiates translation of a subset of mRNAs involved in cell proliferation. This is Eukaryotic translation initiation factor 3 subunit C from Lodderomyces elongisporus (strain ATCC 11503 / CBS 2605 / JCM 1781 / NBRC 1676 / NRRL YB-4239) (Yeast).